A 462-amino-acid chain; its full sequence is ATP synthase subunit beta (462 aa).

149 to 156 (GGAGVGKT) is an ATP binding site.

It belongs to the ATPase alpha/beta chains family. In terms of assembly, F-type ATPases have 2 components, CF(1) - the catalytic core - and CF(0) - the membrane proton channel. CF(1) has five subunits: alpha(3), beta(3), gamma(1), delta(1), epsilon(1). CF(0) has three main subunits: a(1), b(2) and c(9-12). The alpha and beta chains form an alternating ring which encloses part of the gamma chain. CF(1) is attached to CF(0) by a central stalk formed by the gamma and epsilon chains, while a peripheral stalk is formed by the delta and b chains.

It localises to the cell inner membrane. The catalysed reaction is ATP + H2O + 4 H(+)(in) = ADP + phosphate + 5 H(+)(out). In terms of biological role, produces ATP from ADP in the presence of a proton gradient across the membrane. The catalytic sites are hosted primarily by the beta subunits. This Fusobacterium nucleatum subsp. nucleatum (strain ATCC 25586 / DSM 15643 / BCRC 10681 / CIP 101130 / JCM 8532 / KCTC 2640 / LMG 13131 / VPI 4355) protein is ATP synthase subunit beta.